Here is a 672-residue protein sequence, read N- to C-terminus: UvrABC system protein B (672 aa).

One can recognise a Helicase ATP-binding domain in the interval 26–183 (EGLEDGLAHQ…RRLSELQYVR (158 aa)). ATP is bound at residue 39–46 (GVTGSGKT). The Beta-hairpin signature appears at 92–115 (YYDYYQPEAYVPSSDTFIEKDASV). One can recognise a Helicase C-terminal domain in the interval 431–597 (QVDDLLSEIN…ALNKKVTDIL (167 aa)). The disordered stretch occupies residues 601 to 623 (DGPVRSRTKGARGQRAAEPHPDY). A UVR domain is found at 632–667 (EQQIQRLETQMYQHAQNLEFEQAAALRDEIHILREQ).

This sequence belongs to the UvrB family. In terms of assembly, forms a heterotetramer with UvrA during the search for lesions. Interacts with UvrC in an incision complex.

It localises to the cytoplasm. In terms of biological role, the UvrABC repair system catalyzes the recognition and processing of DNA lesions. A damage recognition complex composed of 2 UvrA and 2 UvrB subunits scans DNA for abnormalities. Upon binding of the UvrA(2)B(2) complex to a putative damaged site, the DNA wraps around one UvrB monomer. DNA wrap is dependent on ATP binding by UvrB and probably causes local melting of the DNA helix, facilitating insertion of UvrB beta-hairpin between the DNA strands. Then UvrB probes one DNA strand for the presence of a lesion. If a lesion is found the UvrA subunits dissociate and the UvrB-DNA preincision complex is formed. This complex is subsequently bound by UvrC and the second UvrB is released. If no lesion is found, the DNA wraps around the other UvrB subunit that will check the other stand for damage. The chain is UvrABC system protein B from Edwardsiella ictaluri (strain 93-146).